Here is a 169-residue protein sequence, read N- to C-terminus: Putative esterase F42H10.6 (169 aa).

It belongs to the thioesterase paaI family.

In Caenorhabditis elegans, this protein is Putative esterase F42H10.6.